A 353-amino-acid polypeptide reads, in one-letter code: Ribosomal RNA small subunit methyltransferase H (353 aa).

S-adenosyl-L-methionine-binding positions include 50–52 (GGY), aspartate 69, phenylalanine 96, aspartate 117, and glutamine 124. The interval 276-353 (AAQASRHVPG…PAPQGRGPRR (78 aa)) is disordered.

The protein belongs to the methyltransferase superfamily. RsmH family.

The protein localises to the cytoplasm. It catalyses the reaction cytidine(1402) in 16S rRNA + S-adenosyl-L-methionine = N(4)-methylcytidine(1402) in 16S rRNA + S-adenosyl-L-homocysteine + H(+). In terms of biological role, specifically methylates the N4 position of cytidine in position 1402 (C1402) of 16S rRNA. In Methylorubrum extorquens (strain CM4 / NCIMB 13688) (Methylobacterium extorquens), this protein is Ribosomal RNA small subunit methyltransferase H.